Reading from the N-terminus, the 313-residue chain is Ras-related GTP-binding protein A (313 aa).

GTP contacts are provided by serine 16, glycine 17, glycine 19, lysine 20, threonine 21, serine 22, threonine 36, threonine 42, glycine 65, and histidine 127. The GDP site is built by glycine 17, glycine 19, lysine 20, threonine 21, and serine 22. 2 residues coordinate GDP: histidine 127 and aspartate 130. Lysine 142 participates in a covalent cross-link: Glycyl lysine isopeptide (Lys-Gly) (interchain with G-Cter in ubiquitin). Residues leucine 148 and isoleucine 164 each coordinate GDP. Residue isoleucine 164 participates in GTP binding. Residues lysine 220, lysine 230, and lysine 244 each participate in a glycyl lysine isopeptide (Lys-Gly) (interchain with G-Cter in ubiquitin) cross-link. Serine 309 carries the phosphoserine modification.

Belongs to the GTR/RAG GTP-binding protein family. In terms of assembly, can occur as a homodimer or as a heterodimer with RRAGC or RRAGD in a sequence-independent manner; heterodimerization stabilizes proteins of the heterodimer. The GTP-bound form of RRAGA (in complex with the GDP-bound form of RRAGC or RRAGD) interacts with RPTOR, thereby promoting recruitment of mTORC1 to the lysosomes. The Rag heterodimer interacts with SLC38A9; the probable amino acid sensor. The Rag heterodimer interacts with the Ragulator complex. The GTP-bound form of RRAGA interacts with NOL8. Component of the lysosomal folliculin complex (LFC), composed of FLCN, FNIP1 (or FNIP2), RagA/RRAGA or RagB/RRAGB GDP-bound, RagC/RRAGC or RagD/RRAGD GTP-bound, and Ragulator. Interacts with SH3BP4; the interaction with this negative regulator is most probably direct, preferentially occurs with the inactive GDP-bound form of RRAGA and is negatively regulated by amino acids. Interacts (polyubiquitinated) with TSC2. Interacts with SESN1, SESN2 and SESN3. Interacts with PIP4P1. Interacts with GPR137B. Interacts with WDR83; this interaction regulates the spatiotemporal localization of mTORC1 to the lysosomal surface. Post-translationally, polybiquitinated via 'Lys-63'-linked polyubiquitination by RNF152 in response to amino acid starvation: polyubiquitination of the GDP-bound inactive form by RNF152 promotes RRAGA inactivation and interaction with the GATOR1 complex. This does not affect RRAGA degradation.

Its subcellular location is the cytoplasm. The protein localises to the nucleus. It is found in the lysosome membrane. The catalysed reaction is GTP + H2O = GDP + phosphate + H(+). The activation of GTP-binding proteins is generally mediated by a guanine exchange factor (GEF), while inactivation through hydrolysis of bound GTP is catalyzed by a GTPase activating protein (GAP). The Ragulator complex functions as a GEF and promotes the active GTP-bound form. The GATOR1 complex functions as a GAP and stimulates RRAGA GTPase activity to turn it into its inactive GDP-bound form, preventing mTORC1 recruitment and activation. Functionally, guanine nucleotide-binding protein that plays a crucial role in the cellular response to amino acid availability through regulation of the mTORC1 signaling cascade. Forms heterodimeric Rag complexes with RagC/RRAGC or RagD/RRAGD and cycles between an inactive GDP-bound and an active GTP-bound form: RagA/RRAGA is in its active form when GTP-bound RagA/RRAGA forms a complex with GDP-bound RagC/RRAGC (or RagD/RRAGD) and in an inactive form when GDP-bound RagA/RRAGA heterodimerizes with GTP-bound RagC/RRAGC (or RagD/RRAGD). In its GTP-bound active form, promotes the recruitment of mTORC1 to the lysosomes and its subsequent activation by the GTPase RHEB. Involved in the RCC1/Ran-GTPase pathway. May play a direct role in a TNF-alpha signaling pathway leading to induction of cell death. This is Ras-related GTP-binding protein A from Bos taurus (Bovine).